Here is a 464-residue protein sequence, read N- to C-terminus: tRNA modification GTPase MnmE (464 aa).

(6S)-5-formyl-5,6,7,8-tetrahydrofolate-binding residues include Arg-27, Glu-90, and Lys-129. One can recognise a TrmE-type G domain in the interval 222–384 (GITLVLAGSV…LYDKIRTLIS (163 aa)). Residues 232–237 (NAGKSS), 251–257 (SSYPGTT), and 276–279 (DTAG) contribute to the GTP site. Mg(2+) contacts are provided by Ser-236 and Thr-257. A (6S)-5-formyl-5,6,7,8-tetrahydrofolate-binding site is contributed by Lys-464.

It belongs to the TRAFAC class TrmE-Era-EngA-EngB-Septin-like GTPase superfamily. TrmE GTPase family. In terms of assembly, homodimer. Heterotetramer of two MnmE and two MnmG subunits. Requires K(+) as cofactor.

It localises to the cytoplasm. In terms of biological role, exhibits a very high intrinsic GTPase hydrolysis rate. Involved in the addition of a carboxymethylaminomethyl (cmnm) group at the wobble position (U34) of certain tRNAs, forming tRNA-cmnm(5)s(2)U34. In Borreliella afzelii (strain PKo) (Borrelia afzelii), this protein is tRNA modification GTPase MnmE.